Consider the following 399-residue polypeptide: Elongation factor Tu (399 aa).

Residues 10–207 (KPHVNVGTIG…ALDSYIPEPV (198 aa)) enclose the tr-type G domain. The segment at 19–26 (GHIDHGKT) is G1. 19–26 (GHIDHGKT) contributes to the GTP binding site. Residue T26 coordinates Mg(2+). The tract at residues 60 to 64 (GITIN) is G2. A G3 region spans residues 81-84 (DCPG). Residues 81–85 (DCPGH) and 136–139 (NKVD) each bind GTP. Residues 136–139 (NKVD) are G4. Residues 174-176 (SAL) are G5.

This sequence belongs to the TRAFAC class translation factor GTPase superfamily. Classic translation factor GTPase family. EF-Tu/EF-1A subfamily. In terms of assembly, monomer.

The protein resides in the cytoplasm. It catalyses the reaction GTP + H2O = GDP + phosphate + H(+). In terms of biological role, GTP hydrolase that promotes the GTP-dependent binding of aminoacyl-tRNA to the A-site of ribosomes during protein biosynthesis. This chain is Elongation factor Tu, found in Pseudothermotoga lettingae (strain ATCC BAA-301 / DSM 14385 / NBRC 107922 / TMO) (Thermotoga lettingae).